We begin with the raw amino-acid sequence, 227 residues long: Fibrillarin-like rRNA/tRNA 2'-O-methyltransferase (227 aa).

S-adenosyl-L-methionine is bound by residues 86 to 87, 105 to 106, 130 to 131, and 150 to 153; these read TT, EF, DA, and DVAQ.

It belongs to the methyltransferase superfamily. Fibrillarin family. In terms of assembly, interacts with nop5. Component of box C/D small ribonucleoprotein (sRNP) particles that contain rpl7ae, FlpA and nop5, plus a guide RNA. These sRNP particles form homodimers, giving rise to an asymmetric holoenzyme.

In terms of biological role, involved in pre-rRNA and tRNA processing. Utilizes the methyl donor S-adenosyl-L-methionine to catalyze the site-specific 2'-hydroxyl methylation of ribose moieties in rRNA and tRNA. Site specificity is provided by a guide RNA that base pairs with the substrate. Methylation occurs at a characteristic distance from the sequence involved in base pairing with the guide RNA. This is Fibrillarin-like rRNA/tRNA 2'-O-methyltransferase from Pyrococcus furiosus (strain ATCC 43587 / DSM 3638 / JCM 8422 / Vc1).